A 168-amino-acid polypeptide reads, in one-letter code: uncharacterized protein (168 aa).

The N-acetyltransferase domain occupies 14–168; that stretch reads IDIPLLDAAS…EYKHWIYVTK (155 aa).

This sequence belongs to the acetyltransferase family.

This is an uncharacterized protein from Bacillus subtilis (strain 168).